Consider the following 382-residue polypeptide: MKLHEYQARDLLARYGIPVTGGGVAVTPAEAHAIAEQIGGPVVVKAQVHVGGRGKAGGVKLAQTPAEAEQVAGQILGMNIKGLTVEKVLVAEAISYERELYLSAILDRGSKRITMIASAEGGVEIEEVAKTNPSAIVKIAAHPTMGLLDFQARELAFRIGLRDGKQARQFAQIAGALYRAFVESDASLAEINPLVIKNDGNLLALDSKVLLDESGLFRHPDLAALRDPSAEPEAERRAREADITFIKLDGNIGCMVNGAGLAMATMDVIKLSGGEPANFLDIGGGAGKEKVKAALQIILSDPNVKAVLFNIFGGITRVDEVARGILAALEEVPTDVPMVARLVGTNEEVGRALLAGSKLIPAATLAEGAQKAVAAARGELVS.

One can recognise an ATP-grasp domain in the interval 9 to 237; that stretch reads RDLLARYGIP…PSAEPEAERR (229 aa). Residues Lys45, 52–54, Ile94, and Glu99 contribute to the ATP site; that span reads GRG. Positions 192 and 206 each coordinate Mg(2+). Substrate is bound by residues Asn257 and 314-316; that span reads GIT.

It belongs to the succinate/malate CoA ligase beta subunit family. As to quaternary structure, heterotetramer of two alpha and two beta subunits. Requires Mg(2+) as cofactor.

It carries out the reaction succinate + ATP + CoA = succinyl-CoA + ADP + phosphate. The enzyme catalyses GTP + succinate + CoA = succinyl-CoA + GDP + phosphate. It participates in carbohydrate metabolism; tricarboxylic acid cycle; succinate from succinyl-CoA (ligase route): step 1/1. Its function is as follows. Succinyl-CoA synthetase functions in the citric acid cycle (TCA), coupling the hydrolysis of succinyl-CoA to the synthesis of either ATP or GTP and thus represents the only step of substrate-level phosphorylation in the TCA. The beta subunit provides nucleotide specificity of the enzyme and binds the substrate succinate, while the binding sites for coenzyme A and phosphate are found in the alpha subunit. The polypeptide is Succinate--CoA ligase [ADP-forming] subunit beta (Chloroflexus aggregans (strain MD-66 / DSM 9485)).